A 226-amino-acid chain; its full sequence is uncharacterized protein (226 aa).

The helical transmembrane segment at 5–25 (IKTVSFAAAAILVVIICTFLI) threads the bilayer.

It is found in the cell membrane. This is an uncharacterized protein from Bacillus subtilis (strain 168).